Reading from the N-terminus, the 234-residue chain is Glucosamine-6-phosphate deaminase (234 aa).

D63 functions as the Proton acceptor; for enolization step in the catalytic mechanism. The For ring-opening step role is filled by N129. Residue H131 is the Proton acceptor; for ring-opening step of the active site. E136 (for ring-opening step) is an active-site residue.

It belongs to the glucosamine/galactosamine-6-phosphate isomerase family. NagB subfamily.

The catalysed reaction is alpha-D-glucosamine 6-phosphate + H2O = beta-D-fructose 6-phosphate + NH4(+). The protein operates within amino-sugar metabolism; N-acetylneuraminate degradation; D-fructose 6-phosphate from N-acetylneuraminate: step 5/5. Its function is as follows. Catalyzes the reversible isomerization-deamination of glucosamine 6-phosphate (GlcN6P) to form fructose 6-phosphate (Fru6P) and ammonium ion. This chain is Glucosamine-6-phosphate deaminase, found in Listeria monocytogenes serovar 1/2a (strain ATCC BAA-679 / EGD-e).